The primary structure comprises 450 residues: Bifunctional protein GlmU (450 aa).

Residues 1–226 are pyrophosphorylase; sequence MLAVAVLAAG…ADEVNGINNR (226 aa). UDP-N-acetyl-alpha-D-glucosamine contacts are provided by residues 7-10, Lys-21, Gln-73, and 78-79; these read LAAG and GT. Asp-103 serves as a coordination point for Mg(2+). The UDP-N-acetyl-alpha-D-glucosamine site is built by Gly-140, Glu-155, Asn-170, and Asn-224. Asn-224 contacts Mg(2+). Residues 227–247 are linker; it reads RQLAQCEALLQQRLRHHWMDE. The tract at residues 248–450 is N-acetyltransferase; it reads GVTFIDPESC…TKEGWAERKV (203 aa). Residues Arg-329 and Lys-347 each coordinate UDP-N-acetyl-alpha-D-glucosamine. The active-site Proton acceptor is His-359. Residues Tyr-362 and Asn-373 each contribute to the UDP-N-acetyl-alpha-D-glucosamine site. Acetyl-CoA contacts are provided by residues Ala-376, 382 to 383, Ala-419, and Arg-436; that span reads NY.

The protein in the N-terminal section; belongs to the N-acetylglucosamine-1-phosphate uridyltransferase family. It in the C-terminal section; belongs to the transferase hexapeptide repeat family. As to quaternary structure, homotrimer. The cofactor is Mg(2+).

It is found in the cytoplasm. The enzyme catalyses alpha-D-glucosamine 1-phosphate + acetyl-CoA = N-acetyl-alpha-D-glucosamine 1-phosphate + CoA + H(+). The catalysed reaction is N-acetyl-alpha-D-glucosamine 1-phosphate + UTP + H(+) = UDP-N-acetyl-alpha-D-glucosamine + diphosphate. It functions in the pathway nucleotide-sugar biosynthesis; UDP-N-acetyl-alpha-D-glucosamine biosynthesis; N-acetyl-alpha-D-glucosamine 1-phosphate from alpha-D-glucosamine 6-phosphate (route II): step 2/2. It participates in nucleotide-sugar biosynthesis; UDP-N-acetyl-alpha-D-glucosamine biosynthesis; UDP-N-acetyl-alpha-D-glucosamine from N-acetyl-alpha-D-glucosamine 1-phosphate: step 1/1. Its pathway is bacterial outer membrane biogenesis; LPS lipid A biosynthesis. Its function is as follows. Catalyzes the last two sequential reactions in the de novo biosynthetic pathway for UDP-N-acetylglucosamine (UDP-GlcNAc). The C-terminal domain catalyzes the transfer of acetyl group from acetyl coenzyme A to glucosamine-1-phosphate (GlcN-1-P) to produce N-acetylglucosamine-1-phosphate (GlcNAc-1-P), which is converted into UDP-GlcNAc by the transfer of uridine 5-monophosphate (from uridine 5-triphosphate), a reaction catalyzed by the N-terminal domain. The sequence is that of Bifunctional protein GlmU from Synechococcus sp. (strain CC9605).